The following is a 313-amino-acid chain: Calcium homeostasis modulator protein 6 (313 aa).

The Cytoplasmic portion of the chain corresponds to 1 to 21; that stretch reads MEKFKAVLDLQRKHRNALGYS. Residues 22–37 traverse the membrane as a helical segment; the sequence is LVTLLTAGGEKIFSSV. Over 38–46 the chain is Extracellular; it reads VFQCPCTAT. 3 disulfides stabilise this stretch: C41–C125, C43–C154, and C138–C145. The helical transmembrane segment at 47–68 threads the bilayer; the sequence is WNLPYGLVFLLVPALALFLLGY. Residues 69–101 are Cytoplasmic-facing; it reads ALSARTWRLLTGCCSRSARFSSGLRSAFVCAQL. A helical transmembrane segment spans residues 102 to 126; the sequence is SMTAAFAPLTWVAVALLEGSFYQCA. The Extracellular portion of the chain corresponds to 127–167; that stretch reads VSGSARLAPYLCKGRDPNCNATLPQAPCNKQKVEMQEILSQ. The chain crosses the membrane as a helical span at residues 168–190; the sequence is LKAQSQVFGWILIAAVIILLLLV. The Cytoplasmic portion of the chain corresponds to 191–313; that stretch reads KSVTRCFSPV…DMSMTNTHEL (123 aa).

This sequence belongs to the CALHM family. Oligomerizes to form decameric and undecameric channels. Post-translationally, N-glycosylated. In terms of tissue distribution, immune cells in primary and secondary lymphoid organs.

The protein resides in the cell membrane. It catalyses the reaction ATP(in) = ATP(out). Inhibited by Gd(3+). Partially inhibited by divalent ions Ca(2+) and Ba(2+). Functionally, pore-forming subunit of an ATP-permeable channel. In response to pathogen-derived and proinflammatory stimuli, relocates from intracellular compartments to NK-dendritic cell and NK-macrophage immune synapses where it mediates ATP efflux and NK cell activation involved in antimicrobial and antitumor responses. May assemble to form gap junction channel-like structures with gating and ion conductance likely regulated by membrane lipids and voltage rather than by extracellular calcium levels. In Mus musculus (Mouse), this protein is Calcium homeostasis modulator protein 6.